The following is a 334-amino-acid chain: Glyceraldehyde-3-phosphate dehydrogenase 1 (334 aa).

NAD(+) is bound by residues 12–13 (RI), Asp35, and Arg79. D-glyceraldehyde 3-phosphate contacts are provided by residues 152-154 (SCT), Thr183, Arg198, 211-212 (SG), and Arg234. The active-site Nucleophile is Cys153. Asn315 is a binding site for NAD(+).

This sequence belongs to the glyceraldehyde-3-phosphate dehydrogenase family. In terms of assembly, homotetramer.

The protein resides in the cytoplasm. It catalyses the reaction D-glyceraldehyde 3-phosphate + phosphate + NAD(+) = (2R)-3-phospho-glyceroyl phosphate + NADH + H(+). Its pathway is carbohydrate degradation; glycolysis; pyruvate from D-glyceraldehyde 3-phosphate: step 1/5. With respect to regulation, resistant to pentalenolactone. Catalyzes the oxidative phosphorylation of glyceraldehyde 3-phosphate (G3P) to 1,3-bisphosphoglycerate (BPG) using the cofactor NAD. The first reaction step involves the formation of a hemiacetal intermediate between G3P and a cysteine residue, and this hemiacetal intermediate is then oxidized to a thioester, with concomitant reduction of NAD to NADH. The reduced NADH is then exchanged with the second NAD, and the thioester is attacked by a nucleophilic inorganic phosphate to produce BPG. The protein is Glyceraldehyde-3-phosphate dehydrogenase 1 (gap1) of Streptomyces avermitilis (strain ATCC 31267 / DSM 46492 / JCM 5070 / NBRC 14893 / NCIMB 12804 / NRRL 8165 / MA-4680).